The primary structure comprises 388 residues: uncharacterized protein (388 aa).

Residues C18, C24, C27, and C99 each contribute to the [4Fe-4S] cluster site. 3 residues coordinate S-adenosyl-L-methionine: Q212, E262, and N313. C343 serves as the catalytic Nucleophile.

The protein belongs to the class I-like SAM-binding methyltransferase superfamily. RNA M5U methyltransferase family.

This is an uncharacterized protein from Bdellovibrio bacteriovorus (strain ATCC 15356 / DSM 50701 / NCIMB 9529 / HD100).